We begin with the raw amino-acid sequence, 102 residues long: uncharacterized protein (102 aa).

The chain crosses the membrane as a helical span at residues 36–55; it reads IISLLAIFIKMCLWLWKQFL.

It localises to the membrane. This is an uncharacterized protein from Homo sapiens (Human).